The primary structure comprises 362 residues: Phosphoglycolate phosphatase 1B, chloroplastic (362 aa).

The transit peptide at 1–54 (MLSRSVASAVTPVSSSSLLPNSKPIFCLKTLSGYRSSSFCGGCIRKINHKPLRM) directs the protein to the chloroplast. Thr55 carries the N-acetylthreonine modification. Glu80 (nucleophile) is an active-site residue. Ser356 carries the phosphoserine modification.

Belongs to the HAD-like hydrolase superfamily. CbbY/CbbZ/Gph/YieH family.

The protein localises to the plastid. It is found in the chloroplast. The enzyme catalyses 2-phosphoglycolate + H2O = glycolate + phosphate. In terms of biological role, photorespiratory enzyme that dephosphorylates the 2-phosphoglycolate produced by the RuBisCO oxygenation reaction. The polypeptide is Phosphoglycolate phosphatase 1B, chloroplastic (PGLP1B) (Arabidopsis thaliana (Mouse-ear cress)).